Here is a 204-residue protein sequence, read N- to C-terminus: Putative peroxiredoxin ycf42 (204 aa).

Residues 5–163 (PKIGKTPPNF…LLRILESIQY (159 aa)) enclose the Thioredoxin domain.

The protein belongs to the peroxiredoxin family. AhpC/Prx1 subfamily.

The protein localises to the plastid. The protein resides in the chloroplast. It catalyses the reaction a hydroperoxide + [protein]-dithiol = [protein]-disulfide + an alcohol + H2O. The polypeptide is Putative peroxiredoxin ycf42 (ycf42) (Trieres chinensis (Marine centric diatom)).